An 89-amino-acid chain; its full sequence is FMRFamide-like neuropeptides 19 (89 aa).

Positions 1–20 are cleaved as a signal peptide; sequence MSFQLTLFSMLFLLIAVVVG. Positions 21-67 are excised as a propeptide; the sequence is QPIQSQNGDLKMQAVQDNSPLNMEAFNDDSALYDYLEQSDPSLKSME. Phenylalanine 76 bears the Phenylalanine amide mark. The propeptide occupies 80-89; that stretch reads ASWASSVRFG.

This sequence belongs to the FARP (FMRFamide related peptide) family. In terms of tissue distribution, each flp gene is expressed in a distinct set of neurons. Flp-19 is expressed in the URX interneurons, the serotonin and acetylcholine-expressing HSN neurons, and the AIN, AWA and BAG neurons.

The protein localises to the secreted. In terms of biological role, FMRFamides and FMRFamide-like peptides are neuropeptides. WANQVRF-amide inhibits the activity of dissected pharyngeal myogenic muscle system. The protein is FMRFamide-like neuropeptides 19 of Caenorhabditis elegans.